The sequence spans 610 residues: Dapper homolog 3 (610 aa).

The residue at position 6 (Ser6) is a Phosphoserine. 3 disordered regions span residues 50 to 76 (PGMGGAEAEDEEDAEEDEDAAAARRAA), 102 to 179 (LESG…SVGA), and 200 to 579 (TCSS…PAGP). Residues 56 to 69 (EAEDEEDAEEDEDA) are compositionally biased toward acidic residues. Positions 63-87 (AEEDEDAAAARRAAAALEEQLEALP) form a coiled coil. A compositionally biased stretch (low complexity) spans 120 to 138 (DPSSTGGPDSPPSTFCGDS). Ser165 and Ser237 each carry phosphoserine. Omega-N-methylarginine is present on Arg255. Positions 317–331 (PPEPAPPAAASPPSS) are enriched in pro residues. A compositionally biased stretch (low complexity) spans 344-356 (PGAPAASRGLPGR). Residues Ser409 and Ser456 each carry the phosphoserine modification. Over residues 475–485 (PRGPAPSPSAP) the composition is skewed to pro residues. Positions 524–545 (ESESSASEGESPAFSSASSDSD) are enriched in low complexity. Gly residues predominate over residues 566–576 (GPGGAAGGGTP). A PDZ-binding motif is present at residues 607-610 (MTTV).

The protein belongs to the dapper family. In terms of assembly, can form homodimers and heterodimers with DACT1 or DACT3. Interacts with CSNK1D, PKA catalytic subunit, PKC-type kinase, DVL1, DVL2, DVL3, VANGL1, VANGL2 and CTNND1. In terms of tissue distribution, expressed in brain and uterus.

In terms of biological role, may be involved in regulation of intracellular signaling pathways during development. Specifically thought to play a role in canonical and/or non-canonical Wnt signaling pathways through interaction with DSH (Dishevelled) family proteins. This is Dapper homolog 3 (Dact3) from Mus musculus (Mouse).